Reading from the N-terminus, the 383-residue chain is 6-hydroxynicotinate 3-monooxygenase (383 aa).

The signal sequence occupies residues 1–26 (MQGKPRIAVIGAGLGGTAGAALMARA). FAD-binding positions include glycine 15, 34 to 35 (EQ), histidine 47, arginine 108, and leucine 130. The Proton acceptor role is filled by histidine 47. The active-site Proton acceptor is the tyrosine 214. FAD contacts are provided by residues aspartate 293 and 306–307 (AA).

The protein belongs to the 6-hydroxynicotinate 3-monooxygenase family. In terms of assembly, monomer. The cofactor is FAD.

The catalysed reaction is 6-hydroxynicotinate + NADH + O2 + 2 H(+) = 2,5-dihydroxypyridine + CO2 + NAD(+) + H2O. It functions in the pathway cofactor degradation; nicotinate degradation. Its activity is regulated as follows. Competitively inhibited by 6-hydroxynicotinaldehyde. Functionally, flavin-dependent monooxygenase (FMO) that catalyzes the decarboxylative hydroxylation of 6-hydroxynicotinic acid (6-HNA) to 2,5-dihydroxypyridine (2,5-DHP) with concomitant oxidation of NADH, a step in the aerobic nicotinate degradation pathway. Is also active on the non-natural substrate 5-chloro-6-hydroxynicotinate, and is much less efficient on the substrate analog 4-hydroxybenzoate. The polypeptide is 6-hydroxynicotinate 3-monooxygenase (Bordetella bronchiseptica (strain ATCC BAA-588 / NCTC 13252 / RB50) (Alcaligenes bronchisepticus)).